Consider the following 614-residue polypeptide: Cathepsin F (614 aa).

The N-terminal stretch at 1–20 is a signal peptide; sequence MRLFAAATVALVLLLGQAAG. The propeptide at 21 to 393 is activation peptide; sequence EELAEERAGQ…AAVVPAYHGE (373 aa). The disordered stretch occupies residues 25-50; sequence EERAGQAQGDAESTESSETTTDQAVS. Residues 29–45 show a composition bias toward low complexity; sequence GQAQGDAESTESSETTT. N-linked (GlcNAc...) asparagine glycosylation is present at Asn151. Cystine bridges form between Cys415-Cys456 and Cys449-Cys489. Cys418 is an active-site residue. 2 N-linked (GlcNAc...) asparagine glycosylation sites follow: Asn492 and Asn510. Cys548 and Cys602 are oxidised to a cystine. Residues His555 and Asn581 contribute to the active site.

The protein belongs to the peptidase C1 family.

The enzyme catalyses The recombinant enzyme cleaves synthetic substrates with Phe and Leu (better than Val) in P2, with high specificity constant (kcat/Km) comparable to that of cathepsin L.. May have a role in autophagic cell death. In Drosophila melanogaster (Fruit fly), this protein is Cathepsin F.